The sequence spans 303 residues: Glutaminase (303 aa).

Substrate contacts are provided by S63, N113, E157, N164, Y188, Y239, and V257.

Belongs to the glutaminase family. Homotetramer.

It carries out the reaction L-glutamine + H2O = L-glutamate + NH4(+). The sequence is that of Glutaminase from Saccharopolyspora erythraea (strain ATCC 11635 / DSM 40517 / JCM 4748 / NBRC 13426 / NCIMB 8594 / NRRL 2338).